Consider the following 518-residue polypeptide: Glutamate--cysteine ligase (518 aa).

This sequence belongs to the glutamate--cysteine ligase type 1 family. Type 1 subfamily.

It catalyses the reaction L-cysteine + L-glutamate + ATP = gamma-L-glutamyl-L-cysteine + ADP + phosphate + H(+). The protein operates within sulfur metabolism; glutathione biosynthesis; glutathione from L-cysteine and L-glutamate: step 1/2. In Shigella flexneri serotype 5b (strain 8401), this protein is Glutamate--cysteine ligase.